We begin with the raw amino-acid sequence, 364 residues long: tRNA/tmRNA (uracil-C(5))-methyltransferase (364 aa).

5 residues coordinate S-adenosyl-L-methionine: Gln-188, Tyr-216, Asn-221, Glu-237, and Asp-297. Cys-322 serves as the catalytic Nucleophile. Glu-356 functions as the Proton acceptor in the catalytic mechanism.

This sequence belongs to the class I-like SAM-binding methyltransferase superfamily. RNA M5U methyltransferase family. TrmA subfamily.

The enzyme catalyses uridine(54) in tRNA + S-adenosyl-L-methionine = 5-methyluridine(54) in tRNA + S-adenosyl-L-homocysteine + H(+). The catalysed reaction is uridine(341) in tmRNA + S-adenosyl-L-methionine = 5-methyluridine(341) in tmRNA + S-adenosyl-L-homocysteine + H(+). Functionally, dual-specificity methyltransferase that catalyzes the formation of 5-methyluridine at position 54 (m5U54) in all tRNAs, and that of position 341 (m5U341) in tmRNA (transfer-mRNA). This is tRNA/tmRNA (uracil-C(5))-methyltransferase from Mannheimia succiniciproducens (strain KCTC 0769BP / MBEL55E).